The following is a 633-amino-acid chain: Breast carcinoma-amplified sequence 1 homolog (633 aa).

Disordered stretches follow at residues 1 to 34 and 57 to 422; these read MGNQ…CVQN and SSKD…KLFW. Composition is skewed to polar residues over residues 24–34 and 57–68; these read KVTSDNECVQN and SSKDNVATSSPK. The residue at position 127 (Ser-127) is a Phosphoserine. Polar residues predominate over residues 278–288; the sequence is VDTTENSSSIM. Residues 300-318 are compositionally biased toward basic and acidic residues; that stretch reads TETKKDPEDTKATKADSVC. The residue at position 328 (Ser-328) is a Phosphoserine. Thr-330 bears the Phosphothreonine mark. Over residues 359-378 the composition is skewed to polar residues; it reads NSPTTSANLKSDKANFTPQE. Phosphoserine is present on Ser-360. Basic and acidic residues predominate over residues 400–410; sequence SEGRDSGKEKA. Phosphoserine occurs at positions 425 and 443. The tract at residues 454–633 is disordered; sequence ESSLQTVDLS…VSIGPVGKSK (180 aa). Over residues 471 to 481 the composition is skewed to basic and acidic residues; it reads TDVKVKEESKP. Polar residues predominate over residues 510–522; it reads KDSSCQTSNSVEK. The residue at position 523 (Thr-523) is a Phosphothreonine. A Phosphoserine modification is found at Ser-525. Positions 537–555 are enriched in basic and acidic residues; the sequence is KNKETSSSKDKKSVDKKSA. Phosphoserine occurs at positions 601 and 615. Positions 614–633 are interacts with DYNLL1 AND DYNLL2; it reads MSDAQVQTDPVSIGPVGKSK.

In terms of assembly, homodimer. Interacts with DYNLL1 and DYNLL2. In terms of tissue distribution, highly expressed in the brain and, more specifically, in oligodendrocytes. Expressed in the Schwann cells (at protein level).

Its subcellular location is the cytoplasm. Its function is as follows. Required for myelination. This is Breast carcinoma-amplified sequence 1 homolog (Bcas1) from Mus musculus (Mouse).